Here is a 165-residue protein sequence, read N- to C-terminus: Xanthine-guanine phosphoribosyltransferase (165 aa).

Residues 41–42 and 98–106 each bind 5-phospho-alpha-D-ribose 1-diphosphate; these read RG and DDLTDTGKT. Asp-99 lines the Mg(2+) pocket. Guanine-binding residues include Asp-102 and Ile-145. Asp-102 and Ile-145 together coordinate xanthine. Residues 102–106 and 144–145 contribute to the GMP site; these read DTGKT and WI.

It belongs to the purine/pyrimidine phosphoribosyltransferase family. XGPT subfamily. Homotetramer. It depends on Mg(2+) as a cofactor.

It localises to the cell inner membrane. The enzyme catalyses GMP + diphosphate = guanine + 5-phospho-alpha-D-ribose 1-diphosphate. It carries out the reaction XMP + diphosphate = xanthine + 5-phospho-alpha-D-ribose 1-diphosphate. It catalyses the reaction IMP + diphosphate = hypoxanthine + 5-phospho-alpha-D-ribose 1-diphosphate. It participates in purine metabolism; GMP biosynthesis via salvage pathway; GMP from guanine: step 1/1. Its pathway is purine metabolism; XMP biosynthesis via salvage pathway; XMP from xanthine: step 1/1. Functionally, purine salvage pathway enzyme that catalyzes the transfer of the ribosyl-5-phosphate group from 5-phospho-alpha-D-ribose 1-diphosphate (PRPP) to the N9 position of the 6-oxopurines guanine and xanthine to form the corresponding ribonucleotides GMP (guanosine 5'-monophosphate) and XMP (xanthosine 5'-monophosphate), with the release of PPi. To a lesser extent, also acts on hypoxanthine. In Agrobacterium fabrum (strain C58 / ATCC 33970) (Agrobacterium tumefaciens (strain C58)), this protein is Xanthine-guanine phosphoribosyltransferase.